The chain runs to 354 residues: Vanillate O-demethylase oxygenase subunit (354 aa).

A Rieske domain is found at 7-107 (WYVACTPDEI…VEERYGFIWV (101 aa)). [2Fe-2S] cluster is bound by residues Cys-47, His-49, Cys-66, and His-69.

The protein belongs to the bacterial ring-hydroxylating dioxygenase alpha subunit family. In terms of assembly, this demethylase system consists of two proteins: an oxygenase and an oxygenase reductase. [2Fe-2S] cluster is required as a cofactor. Fe cation serves as cofactor.

The catalysed reaction is vanillate + NADH + O2 + H(+) = 3,4-dihydroxybenzoate + formaldehyde + NAD(+) + H2O. It participates in xenobiotic degradation; vanillyl-alcohol degradation. The chain is Vanillate O-demethylase oxygenase subunit (vanA) from Pseudomonas sp. (strain HR199 / DSM 7063).